The primary structure comprises 338 residues: Trace amine-associated receptor 9 (338 aa).

The Extracellular segment spans residues 1–23 (MELCYENVNGSCIKSSYSPWPRA). N-linked (GlcNAc...) asparagine glycosylation occurs at N9. 2 cysteine pairs are disulfide-bonded: C12/C176 and C95/C180. Residues 24 to 48 (ILYAVLGLGALLAVFGNLLVITAIL) traverse the membrane as a helical segment. Over 49-58 (HFKQLHTPTN) the chain is Cytoplasmic. The helical transmembrane segment at 59–80 (FLVASLACADFLVGVTVMPFST) threads the bilayer. The Extracellular portion of the chain corresponds to 81 to 95 (VRSVEGCWYFGDTYC). Residues 96–118 (KFHTCFDTSFCFASLFHLCCISI) traverse the membrane as a helical segment. Spermidine-binding residues include D102 and T103. Over 119–138 (DRYVAVTDPLTYPTKFTISV) the chain is Cytoplasmic. A helical membrane pass occupies residues 139–160 (SGVCIALSWFFSVTYSFSIFYT). At 161-186 (GANEEGIEELVVALTCVGGCQAPLNQ) the chain is on the extracellular side. Residues 164-177 (EEGIEELVVALTCV) are extracellular Loop 2 (ECL2). The chain crosses the membrane as a helical span at residues 187 to 208 (NWVLLCFLLFFLPTVVMVFLYG). Residues 209 to 246 (RIFLVAKQQARKIEGSANQPQASSESYKERVARRERKA) are Cytoplasmic-facing. Residues 247–270 (AKTLGIAMAAFLVSWLPYIIDAVI) traverse the membrane as a helical segment. Residues 271 to 283 (DAYMNFITPAYVY) are Extracellular-facing. The chain crosses the membrane as a helical span at residues 284–304 (EILVWCVYYNSAMNPLIYAFF). At 305 to 338 (YPWFRKAIKLIVSGKVFRADSSRTNLFSEEAGAG) the chain is on the cytoplasmic side.

The protein belongs to the G-protein coupled receptor 1 family. Mainly expressed in neurons of the olfactory epithelium. Also expressed in the intestine.

It is found in the cell membrane. Olfactory receptor specific for trace amines, such as triethylamine, N-methylpiperidine, N,N-dimethylcyclohexylamine (DMCHA), beta-phenylethylamine (beta-PEA), cadaverine (CAD) and polyamines such as spermidine. Trace amine compounds are enriched in animal body fluids and act on trace amine-associated receptors (TAARs) to elicit both intraspecific and interspecific innate behaviors. Trace amine-binding causes a conformation change that triggers signaling via G(s)-class of G alpha proteins (GNAL or GNAS). In mature olfactory sensory neurons, Taar9 is coupled with GNAL/G(olf)G alpha protein and mediates activation of adenylate cyclase activity to activate cAMP signaling and eventually transmit odorant signals to achieve membrane depolarization. In immature olfactory sensory neurons, Taar9 is coupled with GNAS/G(s) G alpha proteins. The polypeptide is Trace amine-associated receptor 9 (Rattus norvegicus (Rat)).